The sequence spans 347 residues: Phosphate acyltransferase (347 aa).

It belongs to the PlsX family. Homodimer. Probably interacts with PlsY.

It localises to the cytoplasm. It catalyses the reaction a fatty acyl-[ACP] + phosphate = an acyl phosphate + holo-[ACP]. It participates in lipid metabolism; phospholipid metabolism. Catalyzes the reversible formation of acyl-phosphate (acyl-PO(4)) from acyl-[acyl-carrier-protein] (acyl-ACP). This enzyme utilizes acyl-ACP as fatty acyl donor, but not acyl-CoA. This chain is Phosphate acyltransferase, found in Dehalococcoides mccartyi (strain ATCC BAA-2100 / JCM 16839 / KCTC 5957 / BAV1).